The primary structure comprises 338 residues: Acetylcholinesterase (338 aa).

N-linked (GlcNAc...) asparagine glycosylation occurs at Asn8. Ser99 acts as the Acyl-ester intermediate in catalysis. An intrachain disulfide couples Cys153 to Cys164. The active-site Charge relay system is the Glu226.

Belongs to the type-B carboxylesterase/lipase family.

It is found in the synapse. It localises to the secreted. The protein resides in the cell membrane. The catalysed reaction is acetylcholine + H2O = choline + acetate + H(+). Its function is as follows. Terminates signal transduction at the neuromuscular junction by rapid hydrolysis of the acetylcholine released into the synaptic cleft. The sequence is that of Acetylcholinesterase (ache) from Myxine glutinosa (Atlantic hagfish).